The primary structure comprises 376 residues: Carboxylic ester hydrolase LipN (376 aa).

Active-site residues include Ser216, Asp316, and His346.

This sequence belongs to the 'GDXG' lipolytic enzyme family.

It localises to the cytoplasm. The enzyme catalyses a carboxylic ester + H2O = an alcohol + a carboxylate + H(+). It catalyses the reaction an acetyl ester + H2O = an aliphatic alcohol + acetate + H(+). The catalysed reaction is a butanoate ester + H2O = an aliphatic alcohol + butanoate + H(+). It carries out the reaction an octanoate ester + H2O = an aliphatic alcohol + octanoate + H(+). The enzyme catalyses decanoate ester + H2O = decanoate + an aliphatic alcohol + H(+). It catalyses the reaction a dodecanoate ester + H2O = an aliphatic alcohol + dodecanoate + H(+). The catalysed reaction is 1,2,3-tributanoylglycerol + H2O = dibutanoylglycerol + butanoate + H(+). It carries out the reaction 4-acetoxyphenol + H2O = hydroquinone + acetate + H(+). Its activity is regulated as follows. Completely inhibited by tetrahydrolipstatin (THL), RHC-80267 and N-bromosuccinimide. In terms of biological role, non specific carboxylic ester hydrolase. Hydrolyzes various pNP-esters, with a preference for short carbon chain substrates. Can also hydrolyze tributyrin to di- and monobutyrin and 4-hydroxyphenylacetate to hydroquinone. The sequence is that of Carboxylic ester hydrolase LipN from Mycobacterium tuberculosis (strain ATCC 25618 / H37Rv).